The primary structure comprises 368 residues: tRNA-specific 2-thiouridylase MnmA (368 aa).

ATP is bound by residues 24-31 (AMSGGVDS) and Leu50. Cys117 acts as the Nucleophile in catalysis. Cys117 and Cys213 are joined by a disulfide. Gly141 provides a ligand contact to ATP. Residues 163–165 (KDQ) form an interaction with tRNA region. Catalysis depends on Cys213, which acts as the Cysteine persulfide intermediate.

It belongs to the MnmA/TRMU family.

The protein localises to the cytoplasm. The catalysed reaction is S-sulfanyl-L-cysteinyl-[protein] + uridine(34) in tRNA + AH2 + ATP = 2-thiouridine(34) in tRNA + L-cysteinyl-[protein] + A + AMP + diphosphate + H(+). Functionally, catalyzes the 2-thiolation of uridine at the wobble position (U34) of tRNA, leading to the formation of s(2)U34. This is tRNA-specific 2-thiouridylase MnmA from Wolbachia pipientis subsp. Culex pipiens (strain wPip).